Consider the following 432-residue polypeptide: MFRPNSLLIPSNLSTTKSQRNTMLNSSYLSFALIFFCCILFSALASSLPVSDPELVVEEVHRKINESISRRKLGFFSCGSGNPIDDCWRCDKDWEKNRKRLADCGIGFGKNAIGGRDGEIYVVTDPGNDDPVNPRPGTLRYAVIQDEPLWIIFKRDMTIQLKEELIMNSFKTLDGRGASVHISGGPCITIQYVTNIIIHGLHIHDCKQGGNTYVRDSPEHYGYRTVSDGDGVSIFGGSHVWVDHCSLSNCNDGLIDAIRGSTAITISNNYLTHHNKVMLLGHSDTYEQDKNMQVTIAFNHFGEGLVQRMPRCRHGYFHVVNNDYTHWEMYAIGGSANPTINSQGNRFLAPDDSSSKEVTKHEDAPEDEWRNWNWRSEGDLLLNGAFFTYSGAGPAKSSSYSKASSLAARPSSHVGEITIASGALSCKRGSHC.

The N-terminal stretch at methionine 1–alanine 45 is a signal peptide. N-linked (GlcNAc...) asparagine glycosylation is present at asparagine 65. 3 residues coordinate Ca(2+): aspartate 228, aspartate 252, and aspartate 256. The active site involves arginine 308.

It belongs to the polysaccharide lyase 1 family. The cofactor is Ca(2+).

The catalysed reaction is Eliminative cleavage of (1-&gt;4)-alpha-D-galacturonan to give oligosaccharides with 4-deoxy-alpha-D-galact-4-enuronosyl groups at their non-reducing ends.. Its pathway is glycan metabolism; pectin degradation; 2-dehydro-3-deoxy-D-gluconate from pectin: step 2/5. This is Probable pectate lyase 22 from Arabidopsis thaliana (Mouse-ear cress).